Reading from the N-terminus, the 246-residue chain is 23S rRNA (guanosine-2'-O-)-methyltransferase RlmB (246 aa).

Residues Gly-197, Ile-217, and Leu-226 each contribute to the S-adenosyl-L-methionine site.

Belongs to the class IV-like SAM-binding methyltransferase superfamily. RNA methyltransferase TrmH family. RlmB subfamily.

The protein resides in the cytoplasm. The catalysed reaction is guanosine(2251) in 23S rRNA + S-adenosyl-L-methionine = 2'-O-methylguanosine(2251) in 23S rRNA + S-adenosyl-L-homocysteine + H(+). Its function is as follows. Specifically methylates the ribose of guanosine 2251 in 23S rRNA. This is 23S rRNA (guanosine-2'-O-)-methyltransferase RlmB from Haemophilus ducreyi (strain 35000HP / ATCC 700724).